The sequence spans 186 residues: Transposon Tn501 resolvase (186 aa).

The region spanning 4–137 (HRIGYVRVSS…EGITLAKQRG (134 aa)) is the Resolvase/invertase-type recombinase catalytic domain. The active-site O-(5'-phospho-DNA)-serine intermediate is Ser12. Residues 17 to 38 (NPERQLEQTQVSKVFTDKASGK) are disordered. Positions 164-183 (KAQLAREFNISRETLYQYLR) form a DNA-binding region, H-T-H motif.

This sequence belongs to the site-specific recombinase resolvase family.

Resolvase catalyzes the resolution (a site-specific recombination) of the cointegrated replicon to yield the final transposition products. The chain is Transposon Tn501 resolvase (tnpR) from Pseudomonas aeruginosa.